The chain runs to 269 residues: Tryptophan synthase alpha chain (269 aa).

Catalysis depends on proton acceptor residues Glu49 and Asp60.

Belongs to the TrpA family. As to quaternary structure, tetramer of two alpha and two beta chains.

It carries out the reaction (1S,2R)-1-C-(indol-3-yl)glycerol 3-phosphate + L-serine = D-glyceraldehyde 3-phosphate + L-tryptophan + H2O. It functions in the pathway amino-acid biosynthesis; L-tryptophan biosynthesis; L-tryptophan from chorismate: step 5/5. Functionally, the alpha subunit is responsible for the aldol cleavage of indoleglycerol phosphate to indole and glyceraldehyde 3-phosphate. In Actinobacillus pleuropneumoniae serotype 7 (strain AP76), this protein is Tryptophan synthase alpha chain.